Here is a 454-residue protein sequence, read N- to C-terminus: Cytochrome b-c1 complex subunit 2, mitochondrial (454 aa).

A mitochondrion-targeting transit peptide spans 1–35 (MISRSALSRGSQLALRRPAAAKTAQRGFAAAAASP).

This sequence belongs to the peptidase M16 family. UQCRC2/QCR2 subfamily. As to quaternary structure, component of the ubiquinol-cytochrome c oxidoreductase (cytochrome b-c1 complex, complex III, CIII), a multisubunit enzyme composed of 10 subunits. The complex is composed of 3 respiratory subunits cytochrome b (cob), cytochrome c1 (cyt-1) and Rieske protein (fes-1), 2 core protein subunits pep and ucr-1, and 5 low-molecular weight protein subunits qcr6, qcr7, qcr8, qcr9 and probably NCU16844/qcr10. The complex exists as an obligatory dimer and forms supercomplexes (SCs) in the inner mitochondrial membrane with NADH-ubiquinone oxidoreductase (complex I, CI) and cytochrome c oxidase (complex IV, CIV), resulting in different assemblies (supercomplexes SCI(1)III(2), SCIII(2)IV(1) and SCIII(2)IV(2) as well as higher order I(x)III(y)IV(z) megacomplexes).

Its subcellular location is the mitochondrion inner membrane. Functionally, component of the ubiquinol-cytochrome c oxidoreductase, a multisubunit transmembrane complex that is part of the mitochondrial electron transport chain which drives oxidative phosphorylation. The respiratory chain contains 3 multisubunit complexes succinate dehydrogenase (complex II, CII), ubiquinol-cytochrome c oxidoreductase (cytochrome b-c1 complex, complex III, CIII) and cytochrome c oxidase (complex IV, CIV), that cooperate to transfer electrons derived from NADH and succinate to molecular oxygen, creating an electrochemical gradient over the inner membrane that drives transmembrane transport and the ATP synthase. The cytochrome b-c1 complex catalyzes electron transfer from ubiquinol to cytochrome c, linking this redox reaction to translocation of protons across the mitochondrial inner membrane, with protons being carried across the membrane as hydrogens on the quinol. In the process called Q cycle, 2 protons are consumed from the matrix, 4 protons are released into the intermembrane space and 2 electrons are passed to cytochrome c. The polypeptide is Cytochrome b-c1 complex subunit 2, mitochondrial (ucr-1) (Neurospora crassa (strain ATCC 24698 / 74-OR23-1A / CBS 708.71 / DSM 1257 / FGSC 987)).